We begin with the raw amino-acid sequence, 64 residues long: Conotoxin mr5.1a (64 aa).

An N-terminal signal peptide occupies residues 1–19 (MRCVPVFVILLLLIASAPS). Positions 20-48 (VDARLKTKDDMPLPSSHANIKRTLQIHRN) are excised as a propeptide. At Glu-60 the chain carries 4-carboxyglutamate.

It belongs to the conotoxin T superfamily. Contains 2 disulfide bonds that can be either 'C1-C3, C2-C4' or 'C1-C4, C2-C3', since these disulfide connectivities have been observed for conotoxins with cysteine framework V (for examples, see AC P0DQQ7 and AC P81755). In terms of tissue distribution, expressed by the venom duct.

It localises to the secreted. The protein is Conotoxin mr5.1a of Conus marmoreus (Marble cone).